Consider the following 129-residue polypeptide: Small ribosomal subunit protein uS11 (129 aa).

The protein belongs to the universal ribosomal protein uS11 family. Part of the 30S ribosomal subunit. Interacts with proteins S7 and S18. Binds to IF-3.

In terms of biological role, located on the platform of the 30S subunit, it bridges several disparate RNA helices of the 16S rRNA. Forms part of the Shine-Dalgarno cleft in the 70S ribosome. This chain is Small ribosomal subunit protein uS11, found in Methylocella silvestris (strain DSM 15510 / CIP 108128 / LMG 27833 / NCIMB 13906 / BL2).